Reading from the N-terminus, the 1400-residue chain is Macrophage-stimulating protein receptor (1400 aa).

An N-terminal signal peptide occupies residues 1-24; sequence MELLPPLPQSFLLLLLLPAKPAAG. The Extracellular segment spans residues 25–957; it reads EDWQCPRTPY…PGPDGVPQST (933 aa). A Sema domain is found at 31 to 522; it reads RTPYAASRDF…SGDQVFQVPI (492 aa). N66 is a glycosylation site (N-linked (GlcNAc...) asparagine). Cystine bridges form between C101/C104, C107/C162, C135/C143, C174/C177, C300/C367, C385/C407, and C386/C422. Residues N419, N458, and N488 are each glycosylated (N-linked (GlcNAc...) asparagine). 4 disulfides stabilise this stretch: C527-C545, C533-C567, C536-C552, and C548-C558. IPT/TIG domains follow at residues 569-671, 684-767, and 770-860; these read PKLT…FRVD, PVLI…FQYR, and PVVL…FRFL. N654, N720, N841, and N897 each carry an N-linked (GlcNAc...) asparagine glycan. A helical transmembrane segment spans residues 958 to 978; sequence LLGILLPLLLLVAALATALVF. Residues 979–1400 lie on the Cytoplasmic side of the membrane; that stretch reads SYWWRRKQLV…RPLSEPPRPT (422 aa). The Protein kinase domain occupies 1082–1345; sequence THSDRVIGKG…VLVGEVEQIV (264 aa). ATP is bound by residues 1088–1096, K1114, and 1161–1164; these read IGKGHFGVV and LPYM. The Proton acceptor role is filled by D1208. R1212 lines the ATP pocket. Phosphotyrosine; by autocatalysis is present on residues Y1238, Y1239, Y1353, and Y1360. Residues 1367 to 1400 form a disordered region; that stretch reads TSHEMNVRPEQPQFSPMPGNVRRPRPLSEPPRPT.

It belongs to the protein kinase superfamily. Tyr protein kinase family. As to quaternary structure, heterodimer of an alpha chain and a beta chain which are disulfide linked. Binds PLXNB1. Associates with and is negatively regulated by HYAL2. Interacts when phosphorylated with downstream effectors including PIK3R1, PCLG1, GRB2 and GAB1. Interacts with integrin beta1/ITGB1 in a ligand-independent fashion. Proteolytic processing yields the two subunits. Post-translationally, autophosphorylated in response to ligand binding on Tyr-1238 and Tyr-1239 in the kinase domain leading to further phosphorylation of Tyr-1353 and Tyr-1360 in the C-terminal multifunctional docking site. In terms of processing, ubiquitinated. Ubiquitination by CBL regulates the receptor stability and activity through proteasomal degradation. O-mannosylation of IPT/TIG domains on Thr or Ser residues by TMEM260 is required for protein maturation. O-mannosylated residues are composed of single mannose glycans that are not elongated or modified. Expressed in colon, skin, lung and bone marrow.

Its subcellular location is the membrane. It carries out the reaction L-tyrosyl-[protein] + ATP = O-phospho-L-tyrosyl-[protein] + ADP + H(+). In its inactive state, the C-terminal tail interacts with the catalytic domain and inhibits the kinase activity. Upon ligand binding, the C-terminal tail is displaced and becomes phosphorylated, thus increasing the kinase activity. Functionally, receptor tyrosine kinase that transduces signals from the extracellular matrix into the cytoplasm by binding to MST1 ligand. Regulates many physiological processes including cell survival, migration and differentiation. Ligand binding at the cell surface induces autophosphorylation of RON on its intracellular domain that provides docking sites for downstream signaling molecules. Following activation by ligand, interacts with the PI3-kinase subunit PIK3R1, PLCG1 or the adapter GAB1. Recruitment of these downstream effectors by RON leads to the activation of several signaling cascades including the RAS-ERK, PI3 kinase-AKT, or PLCgamma-PKC. RON signaling activates the wound healing response by promoting epithelial cell migration, proliferation as well as survival at the wound site. Also plays a role in the innate immune response by regulating the migration and phagocytic activity of macrophages. Alternatively, RON can also promote signals such as cell migration and proliferation in response to growth factors other than MST1 ligand. This Homo sapiens (Human) protein is Macrophage-stimulating protein receptor (MST1R).